We begin with the raw amino-acid sequence, 569 residues long: Protein ste7 (569 aa).

Disordered stretches follow at residues 195-219 (APIT…VNSV) and 255-274 (FSVS…SPPI). The span at 198–219 (TTSSATHTSQFSTSSSSSVNSV) shows a compositional bias: low complexity. Over residues 264–274 (PQTPISMSPPI) the composition is skewed to pro residues.

It belongs to the arrestin family.

In terms of biological role, has a role in promoting meiosis whereby it is involved in establishing the mating pheromone signaling pathway. It also has a role in suppressing meiosis until the conjugation process is complete. This chain is Protein ste7 (ste7), found in Schizosaccharomyces pombe (strain 972 / ATCC 24843) (Fission yeast).